A 142-amino-acid polypeptide reads, in one-letter code: Chorion protein S16 (142 aa).

The N-terminal stretch at M1–A21 is a signal peptide.

It belongs to the chorion protein S16 family.

Its subcellular location is the secreted. Chorion membrane (egg shell) protein; plays a role in protecting the egg from the environment. The polypeptide is Chorion protein S16 (Cp16) (Drosophila grimshawi (Hawaiian fruit fly)).